The chain runs to 196 residues: Probable GTP-binding protein EngB (196 aa).

The EngB-type G domain maps to 21–195 (DVSEICLIGR…YELINKLLGS (175 aa)). Residues 29–36 (GRSNVGKS), 56–60 (GKTRL), 75–78 (DAPG), 142–145 (TKLD), and 174–176 (ISN) each bind GTP. Residues S36 and T58 each contribute to the Mg(2+) site.

The protein belongs to the TRAFAC class TrmE-Era-EngA-EngB-Septin-like GTPase superfamily. EngB GTPase family. The cofactor is Mg(2+).

Its function is as follows. Necessary for normal cell division and for the maintenance of normal septation. This Mycoplasma capricolum subsp. capricolum (strain California kid / ATCC 27343 / NCTC 10154) protein is Probable GTP-binding protein EngB.